A 650-amino-acid polypeptide reads, in one-letter code: Threonine--tRNA ligase (650 aa).

Residues Asp-3–Thr-65 form the TGS domain. The tract at residues Asp-248–Pro-548 is catalytic. Cys-349, His-400, and His-525 together coordinate Zn(2+).

Belongs to the class-II aminoacyl-tRNA synthetase family. In terms of assembly, homodimer. Requires Zn(2+) as cofactor.

The protein resides in the cytoplasm. The enzyme catalyses tRNA(Thr) + L-threonine + ATP = L-threonyl-tRNA(Thr) + AMP + diphosphate + H(+). Functionally, catalyzes the attachment of threonine to tRNA(Thr) in a two-step reaction: L-threonine is first activated by ATP to form Thr-AMP and then transferred to the acceptor end of tRNA(Thr). Also edits incorrectly charged L-seryl-tRNA(Thr). The chain is Threonine--tRNA ligase from Anaeromyxobacter dehalogenans (strain 2CP-C).